A 65-amino-acid chain; its full sequence is Small ribosomal subunit protein bS21A (65 aa).

The protein belongs to the bacterial ribosomal protein bS21 family.

The sequence is that of Small ribosomal subunit protein bS21A from Francisella tularensis subsp. tularensis (strain FSC 198).